The chain runs to 231 residues: 5'-methylthioadenosine/S-adenosylhomocysteine nucleosidase (231 aa).

E12 serves as the catalytic Proton acceptor. Substrate-binding positions include G78, M153, and 174–175 (ME). The active-site Proton donor is the D198.

This sequence belongs to the PNP/UDP phosphorylase family. MtnN subfamily.

The catalysed reaction is S-adenosyl-L-homocysteine + H2O = S-(5-deoxy-D-ribos-5-yl)-L-homocysteine + adenine. It catalyses the reaction S-methyl-5'-thioadenosine + H2O = 5-(methylsulfanyl)-D-ribose + adenine. It carries out the reaction 5'-deoxyadenosine + H2O = 5-deoxy-D-ribose + adenine. It participates in amino-acid biosynthesis; L-methionine biosynthesis via salvage pathway; S-methyl-5-thio-alpha-D-ribose 1-phosphate from S-methyl-5'-thioadenosine (hydrolase route): step 1/2. Catalyzes the irreversible cleavage of the glycosidic bond in both 5'-methylthioadenosine (MTA) and S-adenosylhomocysteine (SAH/AdoHcy) to adenine and the corresponding thioribose, 5'-methylthioribose and S-ribosylhomocysteine, respectively. Also cleaves 5'-deoxyadenosine, a toxic by-product of radical S-adenosylmethionine (SAM) enzymes, into 5-deoxyribose and adenine. This chain is 5'-methylthioadenosine/S-adenosylhomocysteine nucleosidase, found in Bacillus cereus (strain B4264).